Reading from the N-terminus, the 270-residue chain is MNRYQKLCKKLIPFKKGCFIPFVVLGDPSIDMSLKIINALIENGADGLELGIPFSDPIADGEIIQKANLRAFNSKINLHKCFDILSEIREKHQTIPIGLLLYSNLIFKFGINKFYLKCYKIGIDSILIADLPIEESYVFRKYAVINNILPVFICPPDAKKNVIKNIAIHSQGYIYLLSRSGVTGINQEIMIPPLSLINKLKKLTKTPLIQGFGVSYPYQIQKIILSGISGVICGSIIAKLIENYFQDDDKLIKEIIFLSKSFKKATIIIE.

Active-site proton acceptor residues include Glu-49 and Asp-60.

The protein belongs to the TrpA family. In terms of assembly, tetramer of two alpha and two beta chains.

It carries out the reaction (1S,2R)-1-C-(indol-3-yl)glycerol 3-phosphate + L-serine = D-glyceraldehyde 3-phosphate + L-tryptophan + H2O. It participates in amino-acid biosynthesis; L-tryptophan biosynthesis; L-tryptophan from chorismate: step 5/5. In terms of biological role, the alpha subunit is responsible for the aldol cleavage of indoleglycerol phosphate to indole and glyceraldehyde 3-phosphate. This is Tryptophan synthase alpha chain from Buchnera aphidicola subsp. Melaphis rhois.